The following is a 520-amino-acid chain: L-cysteine:1D-myo-inositol 2-amino-2-deoxy-alpha-D-glucopyranoside ligase (520 aa).

Cysteine 48 is a binding site for Zn(2+). L-cysteinyl-5'-AMP contacts are provided by residues 48-51 (CGIT), threonine 63, and 86-88 (NVT). A 'HIGH' region motif is present at residues 50–60 (ITPYDSTHLGH). The 'ERGGDP' region signature appears at 192–197 (ERGGDP). Tryptophan 232 contacts L-cysteinyl-5'-AMP. Cysteine 236 serves as a coordination point for Zn(2+). 254–256 (GED) provides a ligand contact to L-cysteinyl-5'-AMP. Residue histidine 261 participates in Zn(2+) binding. L-cysteinyl-5'-AMP is bound at residue isoleucine 288. Residues 294 to 298 (KMSKS) carry the 'KMSKS' region motif.

Belongs to the class-I aminoacyl-tRNA synthetase family. MshC subfamily. As to quaternary structure, monomer. Requires Zn(2+) as cofactor.

The enzyme catalyses 1D-myo-inositol 2-amino-2-deoxy-alpha-D-glucopyranoside + L-cysteine + ATP = 1D-myo-inositol 2-(L-cysteinylamino)-2-deoxy-alpha-D-glucopyranoside + AMP + diphosphate + H(+). In terms of biological role, catalyzes the ATP-dependent condensation of GlcN-Ins and L-cysteine to form L-Cys-GlcN-Ins. The polypeptide is L-cysteine:1D-myo-inositol 2-amino-2-deoxy-alpha-D-glucopyranoside ligase (Corynebacterium kroppenstedtii (strain DSM 44385 / JCM 11950 / CIP 105744 / CCUG 35717)).